The sequence spans 185 residues: Photosystem I assembly protein Ycf4 (185 aa).

Transmembrane regions (helical) follow at residues Asn-21 to Tyr-43 and Gly-63 to Leu-85.

Belongs to the Ycf4 family.

The protein localises to the plastid. Its subcellular location is the chloroplast thylakoid membrane. Functionally, seems to be required for the assembly of the photosystem I complex. This Aegilops crassa (Persian goatgrass) protein is Photosystem I assembly protein Ycf4.